The sequence spans 1850 residues: Serine/threonine-protein kinase WNK (1850 aa).

Disordered regions lie at residues 1-108 (MPDS…NALE), 221-253 (QHSIFDRSRLNKIPPNTSLASSSSPSDAANNDK), and 272-309 (MVNDGPRTLTGDDMDKMVSEEERARKEQEKREEEEKAA). Low complexity-rich tracts occupy residues 16–26 (SSVSSTTASTT) and 234–251 (PPNTSLASSSSPSDAANN). Positions 284–309 (DMDKMVSEEERARKEQEKREEEEKAA) are enriched in basic and acidic residues. The Protein kinase domain maps to 334–596 (LKFDEELGRG…VKQLLVDDFF (263 aa)). Residues Ser-344, 416–419 (TELM), and Lys-466 contribute to the ATP site. Asp-483 (proton acceptor) is an active-site residue. A coiled-coil region spans residues 693-749 (DHRLLEIKRAKEEEERIREEAEIKEELRLRAEAKEKEKERLEKERLEKKAAAAAAAN). A compositionally biased stretch (basic and acidic residues) spans 727–742 (EKEKERLEKERLEKKA). 7 disordered regions span residues 727–790 (EKEK…AQQP), 890–943 (TPAS…KRKS), 1040–1130 (EPPT…AAKP), 1188–1249 (SPVS…TPAI), 1588–1636 (GTHI…PSHS), 1721–1740 (ASLSLPASPPPNTEIPDNEG), and 1769–1850 (IIPS…IENV). A compositionally biased stretch (pro residues) spans 751-760 (NPTPIPPTPA). A compositionally biased stretch (polar residues) spans 776 to 790 (STQTSAEIQQSAQQP). Residues 890–934 (TPASIASPSPAPSATDVASTTAPVTPAPTPTTTTDGGAAAASTTT) are compositionally biased toward low complexity. Basic and acidic residues predominate over residues 1062-1071 (PKIEIEKTPP). Residues 1077-1101 (QEPNNVQVTNVRKVSQESNAESVQS) are compositionally biased toward polar residues. The span at 1188 to 1207 (SPVSHSLSSNSSPSATTHSN) shows a compositional bias: low complexity. A compositionally biased stretch (polar residues) spans 1208–1217 (MSSIQSTTSV). The span at 1771-1805 (PSSRQSVRSATSSSPSTPPSSSSAPPKSLSSPTKS) shows a compositional bias: low complexity. The span at 1806–1820 (YVSHCSLSIGYGSTA) shows a compositional bias: polar residues. Low complexity predominate over residues 1821–1832 (SSEQQQREPSPS).

Belongs to the protein kinase superfamily. Ser/Thr protein kinase family. WNK subfamily. Interacts with gck-3 (via C-terminus). The cofactor is Mg(2+). As to expression, expressed in pharynx, nervous system, hypodermis, spermatheca, excretory cell and canal and body wall muscles.

The protein localises to the cytoplasm. The catalysed reaction is L-seryl-[protein] + ATP = O-phospho-L-seryl-[protein] + ADP + H(+). It catalyses the reaction L-threonyl-[protein] + ATP = O-phospho-L-threonyl-[protein] + ADP + H(+). Its activity is regulated as follows. Activated in response to hyperosmotic stress: cell shrinkage promotes formation of a membraneless compartment that concentrates wnk-1 with its downstrem substrates. Its function is as follows. Serine/threonine-protein kinase component of the WNK3-SPAK/OSR1 kinase cascade, which plays an important role in the regulation of electrolyte homeostasis and regulatory volume increase in response to hyperosmotic stress. Wnk-1 mediates regulatory volume increase in response to hyperosmotic stress by acting as a molecular crowding sensor, which senses cell shrinkage and mediates formation of a membraneless compartment by undergoing liquid-liquid phase separation. The membraneless compartment concentrates wnk-1 with its substrates. Phosphorylates gck-3. Plays a role in osmotic stress responses during which it increases gpdh-1 translation, likely by phosphorylating gck-3. Essential for larval development and the tubular formation of the excretory canals. This is Serine/threonine-protein kinase WNK from Caenorhabditis elegans.